Reading from the N-terminus, the 300-residue chain is Protoheme IX farnesyltransferase (300 aa).

9 consecutive transmembrane segments (helical) span residues 26–46, 54–74, 102–122, 123–143, 150–170, 177–197, 224–244, 246–266, and 279–299; these read VVQLIVFCALIGMVLAVPGLP, IAWACAGVWLVAGAAAAFNCI, LLFSALLCVAGSALLYFLVNP, LTMWLTFATFVGYAVIYTLIL, NIVIGGASGAMPPVLGWAAMT, ALILFLIIFLWTPPHFWALAL, VLLYTLILFAACLMPFIYGMS, WPYLAAAVLLGAGFCGYGFAL, and FRFSLIHLSALFAALLLDHYL.

This sequence belongs to the UbiA prenyltransferase family. Protoheme IX farnesyltransferase subfamily.

It localises to the cell inner membrane. It catalyses the reaction heme b + (2E,6E)-farnesyl diphosphate + H2O = Fe(II)-heme o + diphosphate. It functions in the pathway porphyrin-containing compound metabolism; heme O biosynthesis; heme O from protoheme: step 1/1. Functionally, converts heme B (protoheme IX) to heme O by substitution of the vinyl group on carbon 2 of heme B porphyrin ring with a hydroxyethyl farnesyl side group. This is Protoheme IX farnesyltransferase from Verminephrobacter eiseniae (strain EF01-2).